A 383-amino-acid chain; its full sequence is Succinyl-diaminopimelate desuccinylase (383 aa).

Residue H72 coordinates Zn(2+). Residue D74 is part of the active site. D105 is a Zn(2+) binding site. Catalysis depends on E137, which acts as the Proton acceptor. E138, E167, and H352 together coordinate Zn(2+).

It belongs to the peptidase M20A family. DapE subfamily. In terms of assembly, homodimer. The cofactor is Zn(2+). Requires Co(2+) as cofactor.

It catalyses the reaction N-succinyl-(2S,6S)-2,6-diaminopimelate + H2O = (2S,6S)-2,6-diaminopimelate + succinate. Its pathway is amino-acid biosynthesis; L-lysine biosynthesis via DAP pathway; LL-2,6-diaminopimelate from (S)-tetrahydrodipicolinate (succinylase route): step 3/3. Its function is as follows. Catalyzes the hydrolysis of N-succinyl-L,L-diaminopimelic acid (SDAP), forming succinate and LL-2,6-diaminopimelate (DAP), an intermediate involved in the bacterial biosynthesis of lysine and meso-diaminopimelic acid, an essential component of bacterial cell walls. This Ehrlichia ruminantium (strain Welgevonden) protein is Succinyl-diaminopimelate desuccinylase.